The following is a 206-amino-acid chain: Cytochrome c biogenesis ATP-binding export protein CcmA (206 aa).

Residues 2 to 206 form the ABC transporter domain; sequence LEARDVVCIR…IQLTPSEGTP (205 aa). ATP is bound at residue 34 to 41; that stretch reads GANGVGKT.

The protein belongs to the ABC transporter superfamily. CcmA exporter (TC 3.A.1.107) family. As to quaternary structure, the complex is composed of two ATP-binding proteins (CcmA) and two transmembrane proteins (CcmB).

It localises to the cell inner membrane. The enzyme catalyses heme b(in) + ATP + H2O = heme b(out) + ADP + phosphate + H(+). Functionally, part of the ABC transporter complex CcmAB involved in the biogenesis of c-type cytochromes; once thought to export heme, this seems not to be the case, but its exact role is uncertain. Responsible for energy coupling to the transport system. This Pectobacterium atrosepticum (strain SCRI 1043 / ATCC BAA-672) (Erwinia carotovora subsp. atroseptica) protein is Cytochrome c biogenesis ATP-binding export protein CcmA.